Here is a 269-residue protein sequence, read N- to C-terminus: Ubiquinone/menaquinone biosynthesis C-methyltransferase UbiE (269 aa).

S-adenosyl-L-methionine is bound by residues threonine 92, aspartate 113, and 141-142 (NA).

It belongs to the class I-like SAM-binding methyltransferase superfamily. MenG/UbiE family.

The enzyme catalyses a 2-demethylmenaquinol + S-adenosyl-L-methionine = a menaquinol + S-adenosyl-L-homocysteine + H(+). It catalyses the reaction a 2-methoxy-6-(all-trans-polyprenyl)benzene-1,4-diol + S-adenosyl-L-methionine = a 5-methoxy-2-methyl-3-(all-trans-polyprenyl)benzene-1,4-diol + S-adenosyl-L-homocysteine + H(+). It functions in the pathway quinol/quinone metabolism; menaquinone biosynthesis; menaquinol from 1,4-dihydroxy-2-naphthoate: step 2/2. It participates in cofactor biosynthesis; ubiquinone biosynthesis. Methyltransferase required for the conversion of demethylmenaquinol (DMKH2) to menaquinol (MKH2) and the conversion of 2-polyprenyl-6-methoxy-1,4-benzoquinol (DDMQH2) to 2-polyprenyl-3-methyl-6-methoxy-1,4-benzoquinol (DMQH2). This chain is Ubiquinone/menaquinone biosynthesis C-methyltransferase UbiE, found in Brucella suis (strain ATCC 23445 / NCTC 10510).